A 480-amino-acid polypeptide reads, in one-letter code: MNRPSQISQDVAQPLSNQHETAMMSSDEDSMSRDSGICELMDENTPVCFSSMSTESTTVQVEECMEIDEDENLQPGPVSRRQKKVTFRREKSSCQVRLFDESPTSHKMFMRPQAPLSVRSENQQLLQQRKRKFEKSEQSSDHFHLEPMSVEAMDDDEIVMMDQNTTKWEPGFRAPNHKKGRLTRSATAFPSLETFEEEEHEEQHHLNVKYHLKTVAKESSKGFRRITAETLRDIFFRLSEKEFDDKYILIDCRYPYEYNRGHIKNAINHFDRVTVSKIFYDENGRKRCNKIPIFYCEFSQARGPKMAYALRQVDRELNVNHYPKCDYEEMYVLDLGYRNFFFAANEANITNLCQPHAYCEMHDKEHTMELKKYNFHNKGQSVLRTVSMSRSFKSLPTGSAFNFVASSASFTSAPSTSTENIDTNDDCQKSRTPAVPRIASRRNLFSDPSHSPTNFAQFPLTCSRETPSPHKHPLTCPRFS.

Polar residues predominate over residues 1 to 20 (MNRPSQISQDVAQPLSNQHE). Positions 1-35 (MNRPSQISQDVAQPLSNQHETAMMSSDEDSMSRDS) are disordered. In terms of domain architecture, Rhodanese spans 243–349 (FDDKYILIDC…FFFAANEANI (107 aa)). Residues 411 to 452 (TSAPSTSTENIDTNDDCQKSRTPAVPRIASRRNLFSDPSHSP) are disordered.

The protein belongs to the MPI phosphatase family.

The catalysed reaction is O-phospho-L-tyrosyl-[protein] + H2O = L-tyrosyl-[protein] + phosphate. Its function is as follows. Required for intestinal cell division following the 16E cell stage of embryogenesis. Regulates intestinal cell divisions and binucleations probably by modulating the activity of the cell cycle regulator wee-1.3 and by activating the cdk-1/cyb-1 complex. Plays a role in male tail development, via regulation of the cell divisions of the ray precursor cell lineages, perhaps acting together with cell cycle regulators cyl-1, cdk-1, cyb-3, and cyd-1. In Caenorhabditis elegans, this protein is M-phase inducer phosphatase cdc-25.2.